Reading from the N-terminus, the 297-residue chain is Protoheme IX farnesyltransferase 1 (297 aa).

9 helical membrane-spanning segments follow: residues 23–43 (VVVL…RAGV), 45–65 (WSVL…AAVV), 93–113 (LPAL…LLVF), 117–137 (LTAW…TGFL), 145–165 (IVIG…AVSG), 171–191 (PLLL…ALAI), 216–236 (LHIL…YAIH), 241–261 (LYLV…WVLY), and 277–297 (IGYL…LLNL).

This sequence belongs to the UbiA prenyltransferase family. Protoheme IX farnesyltransferase subfamily.

The protein resides in the cell inner membrane. The catalysed reaction is heme b + (2E,6E)-farnesyl diphosphate + H2O = Fe(II)-heme o + diphosphate. The protein operates within porphyrin-containing compound metabolism; heme O biosynthesis; heme O from protoheme: step 1/1. In terms of biological role, converts heme B (protoheme IX) to heme O by substitution of the vinyl group on carbon 2 of heme B porphyrin ring with a hydroxyethyl farnesyl side group. This is Protoheme IX farnesyltransferase 1 from Pseudomonas putida (strain ATCC 47054 / DSM 6125 / CFBP 8728 / NCIMB 11950 / KT2440).